A 551-amino-acid chain; its full sequence is Interferon-induced, double-stranded RNA-activated protein kinase (551 aa).

N-acetylalanine is present on alanine 2. The interval 2 to 180 (AGDLSAGFFM…SVKSDYLSSG (179 aa)) is (Microbial infection) Interaction with HCV NS5A. Residues 9-77 (FFMEELNTYR…AKLAVEILNK (69 aa)) enclose the DRBM 1 domain. A Glycyl lysine isopeptide (Lys-Gly) (interchain with G-Cter in ISG15) cross-link involves residue lysine 69. At serine 83 the chain carries Phosphoserine. A phosphothreonine; by autocatalysis mark is found at threonine 88, threonine 89, and threonine 90. The region spanning 100–167 (NYIGLINRIA…AKLAYLQILS (68 aa)) is the DRBM 2 domain. A Phosphotyrosine; by autocatalysis modification is found at tyrosine 101. Lysine 159 is covalently cross-linked (Glycyl lysine isopeptide (Lys-Gly) (interchain with G-Cter in ISG15)). Position 162 is a phosphotyrosine; by autocatalysis (tyrosine 162). Positions 202 to 215 (SSSEGDFSADTSEI) are enriched in polar residues. The segment at 202–222 (SSSEGDFSADTSEINSNSDSL) is disordered. Position 242 is a phosphoserine; by autocatalysis (serine 242). Residues threonine 255 and threonine 258 each carry the phosphothreonine; by autocatalysis modification. The segment at 266–362 (DFKEIELIGS…NSSRSKTKCL (97 aa)) is dimerization. The tract at residues 266–551 (DFKEIELIGS…SPEKNERHTC (286 aa)) is interaction with TRAF5. Residues 267-538 (FKEIELIGSG…TSEILRTLTV (272 aa)) form the Protein kinase domain. 273–281 (IGSGGFGQV) contributes to the ATP binding site. Position 293 is a phosphotyrosine; by autocatalysis (tyrosine 293). Lysine 296 contributes to the ATP binding site. Tandem repeats lie at residues 331–343 (DYDP…SLES) and 345–357 (DYDP…SSRS). Positions 331-357 (DYDPETSDDSLESSDYDPENSKNSSRS) are 2 X 13 AA approximate repeats. The interaction with EIF2S1/EIF-2ALPHA stretch occupies residues 379–496 (EKRRGEKLDK…TAFETSKFFT (118 aa)). The active-site Proton acceptor is aspartate 414. Position 432 (aspartate 432) interacts with Mg(2+). Threonine 446 and threonine 451 each carry phosphothreonine; by autocatalysis. Serine 456 and serine 542 each carry phosphoserine.

Belongs to the protein kinase superfamily. Ser/Thr protein kinase family. GCN2 subfamily. Homodimer. Interacts with STRBP. Interacts with DNAJC3. Forms a complex with FANCA, FANCC, FANCG and HSP70. Interacts with ADAR/ADAR1. Interacts with IRS1. The inactive form interacts with NCK1 and GSN. Interacts (via the kinase catalytic domain) with STAT3 (via SH2 domain), TRAF2 (C-terminus), TRAF5 (C-terminus) and TRAF6 (C-terminus). Interacts with MAP2K6, IKBKB/IKKB, NPM1, TARBP2, NLRP1, NLRP3, NLRC4 and AIM2. Interacts (via DRBM 1 domain) with DUS2L (via DRBM domain). Interacts with DHX9 (via N-terminus) and this interaction is dependent upon activation of the kinase. Interacts with EIF2S1/EIF-2ALPHA; this interaction induces a conformational change in EIF2S1 and its phosphorylation by EIF2AK2. In terms of assembly, (Microbial infection) Interacts with human cytomegalovirus (HCMV) TRS1; this interaction retains EIF2AK2 to the nucleus and prevents its activation. As to quaternary structure, (Microbial infection) Interacts with vaccinia virus protein K3 (K3L); this interaction inhibits EIF2AK2. (Microbial infection) Interacts with human herpes simplex virus 1 (HHV-1) protein US11 in an RNA-dependent manner. In terms of assembly, (Microbial infection) The inactive form interacts with Toscana virus (TOS) NSS. As to quaternary structure, (Microbial infection) Interacts with herpes virus 8 protein v-IRF2; this interaction inhibits EIF2AK2 activation. (Microbial infection) Interacts with vaccinia protein E3. In terms of assembly, (Microbial infection) Interacts (via N-terminus) with Hepatitis C virus (HCV) mature core protein (via N-terminus); this interaction induces the autophosphorylation of EIF2AK2. As to quaternary structure, (Microbial infection) Interacts with Hepatitis C virus (HCV) non-structural protein 5A (NS5A); this interaction leads to disruption of EIF2AK2 dimerization by NS5A. (Microbial infection) Interacts with Hepatitis C virus (HCV) envelope glycoprotein E2; this interaction inhibits EIF2AK2 and blocks its inhibitory effect on protein synthesis and cell growth. In terms of assembly, (Microbial infection) Interacts with human respiratory syncytial virus (HRSV) nucleoprotein; this interaction inhibits EIF2AK2 phosphorylation of EIF2S1 and blocks EIF2AK2-mediated translation shutoff. As to quaternary structure, (Microbial infection) Interacts with human herpesvirus 8 protein MTA/ORF57; this interaction inhibits stress granule formation. It depends on Mg(2+) as a cofactor. Autophosphorylated on several Ser, Thr and Tyr residues. Autophosphorylation of Thr-451 is dependent on Thr-446 and is stimulated by dsRNA binding and dimerization. Autophosphorylation apparently leads to the activation of the kinase. Tyrosine autophosphorylation is essential for efficient dsRNA-binding, dimerization, and kinase activation. In terms of tissue distribution, highly expressed in thymus, spleen and bone marrow compared to non-hematopoietic tissues such as small intestine, liver, or kidney tissues. Colocalizes with GSK3B and TAU in the Alzheimer disease (AD) brain. Elevated levels seen in breast and colon carcinomas, and which correlates with tumor progression and invasiveness or risk of progression.

It localises to the cytoplasm. It is found in the nucleus. The protein localises to the perinuclear region. The enzyme catalyses L-seryl-[protein] + ATP = O-phospho-L-seryl-[protein] + ADP + H(+). It catalyses the reaction L-threonyl-[protein] + ATP = O-phospho-L-threonyl-[protein] + ADP + H(+). The catalysed reaction is L-tyrosyl-[protein] + ATP = O-phospho-L-tyrosyl-[protein] + ADP + H(+). Its activity is regulated as follows. Initially produced in an inactive form and is activated by binding to viral dsRNA, which causes dimerization and autophosphorylation in the activation loop and stimulation of function. ISGylation can activate it in the absence of viral infection. Can also be activated by heparin, pro-inflammatory stimuli, growth factors, cytokines, oxidative stress and the cellular protein PRKRA. Activity is markedly stimulated by manganese ions. Activation is blocked by the viral components HIV-1 Tat protein and large amounts of HIV-1 trans-activation response (TAR) RNA element as well as by the cellular proteins TARBP2, DUS2L, NPM1, NCK1 and ADAR. Down-regulated by Toscana virus (TOS) and Rift valley fever virus (RVFV) NSS which promote its proteasomal degradation. Inhibited by vaccinia virus protein E3, probably via dsRNA sequestering. Functionally, IFN-induced dsRNA-dependent serine/threonine-protein kinase that phosphorylates the alpha subunit of eukaryotic translation initiation factor 2 (EIF2S1/eIF-2-alpha) and plays a key role in the innate immune response to viral infection. Inhibits viral replication via the integrated stress response (ISR): EIF2S1/eIF-2-alpha phosphorylation in response to viral infection converts EIF2S1/eIF-2-alpha in a global protein synthesis inhibitor, resulting to a shutdown of cellular and viral protein synthesis, while concomitantly initiating the preferential translation of ISR-specific mRNAs, such as the transcriptional activator ATF4. Exerts its antiviral activity on a wide range of DNA and RNA viruses including hepatitis C virus (HCV), hepatitis B virus (HBV), measles virus (MV) and herpes simplex virus 1 (HHV-1). Also involved in the regulation of signal transduction, apoptosis, cell proliferation and differentiation: phosphorylates other substrates including p53/TP53, PPP2R5A, DHX9, ILF3, IRS1 and the HHV-1 viral protein US11. In addition to serine/threonine-protein kinase activity, also has tyrosine-protein kinase activity and phosphorylates CDK1 at 'Tyr-4' upon DNA damage, facilitating its ubiquitination and proteasomal degradation. Either as an adapter protein and/or via its kinase activity, can regulate various signaling pathways (p38 MAP kinase, NF-kappa-B and insulin signaling pathways) and transcription factors (JUN, STAT1, STAT3, IRF1, ATF3) involved in the expression of genes encoding pro-inflammatory cytokines and IFNs. Activates the NF-kappa-B pathway via interaction with IKBKB and TRAF family of proteins and activates the p38 MAP kinase pathway via interaction with MAP2K6. Can act as both a positive and negative regulator of the insulin signaling pathway (ISP). Negatively regulates ISP by inducing the inhibitory phosphorylation of insulin receptor substrate 1 (IRS1) at 'Ser-312' and positively regulates ISP via phosphorylation of PPP2R5A which activates FOXO1, which in turn up-regulates the expression of insulin receptor substrate 2 (IRS2). Can regulate NLRP3 inflammasome assembly and the activation of NLRP3, NLRP1, AIM2 and NLRC4 inflammasomes. Plays a role in the regulation of the cytoskeleton by binding to gelsolin (GSN), sequestering the protein in an inactive conformation away from actin. This chain is Interferon-induced, double-stranded RNA-activated protein kinase (EIF2AK2), found in Homo sapiens (Human).